The chain runs to 346 residues: Phosphoribosylformylglycinamidine cyclo-ligase (346 aa).

This sequence belongs to the AIR synthase family.

Its subcellular location is the cytoplasm. It catalyses the reaction 2-formamido-N(1)-(5-O-phospho-beta-D-ribosyl)acetamidine + ATP = 5-amino-1-(5-phospho-beta-D-ribosyl)imidazole + ADP + phosphate + H(+). Its pathway is purine metabolism; IMP biosynthesis via de novo pathway; 5-amino-1-(5-phospho-D-ribosyl)imidazole from N(2)-formyl-N(1)-(5-phospho-D-ribosyl)glycinamide: step 2/2. The polypeptide is Phosphoribosylformylglycinamidine cyclo-ligase (Colwellia psychrerythraea (strain 34H / ATCC BAA-681) (Vibrio psychroerythus)).